A 102-amino-acid polypeptide reads, in one-letter code: Ferredoxin-thioredoxin reductase, catalytic chain (102 aa).

A [4Fe-4S] cluster-binding site is contributed by Cys53. Cys55 functions as the Nucleophile in the catalytic mechanism. Cys55 and Cys85 are oxidised to a cystine. Residues Cys72, Cys74, and Cys83 each coordinate [4Fe-4S] cluster.

It belongs to the ferredoxin thioredoxin reductase beta subunit family. As to quaternary structure, heterodimer of subunit A (variable subunit) and subunit B (catalytic subunit). Heterodimeric FTR forms a complex with ferredoxin and thioredoxin. [4Fe-4S] cluster serves as cofactor.

The protein resides in the plastid. It is found in the chloroplast. The enzyme catalyses [thioredoxin]-disulfide + 2 reduced [2Fe-2S]-[ferredoxin] + 2 H(+) = [thioredoxin]-dithiol + 2 oxidized [2Fe-2S]-[ferredoxin]. Its function is as follows. Catalytic subunit of the ferredoxin-thioredoxin reductase (FTR), which catalyzes the two-electron reduction of thioredoxins by the electrons provided by reduced ferredoxin. The chain is Ferredoxin-thioredoxin reductase, catalytic chain (ftrB) from Guillardia theta (Cryptophyte).